Reading from the N-terminus, the 253-residue chain is Acetylglutamate kinase (253 aa).

Residues 40-41, R62, and N154 contribute to the substrate site; that span reads GG.

This sequence belongs to the acetylglutamate kinase family. ArgB subfamily.

The protein localises to the cytoplasm. The enzyme catalyses N-acetyl-L-glutamate + ATP = N-acetyl-L-glutamyl 5-phosphate + ADP. It functions in the pathway amino-acid biosynthesis; L-arginine biosynthesis; N(2)-acetyl-L-ornithine from L-glutamate: step 2/4. In terms of biological role, catalyzes the ATP-dependent phosphorylation of N-acetyl-L-glutamate. In Staphylococcus saprophyticus subsp. saprophyticus (strain ATCC 15305 / DSM 20229 / NCIMB 8711 / NCTC 7292 / S-41), this protein is Acetylglutamate kinase.